A 660-amino-acid chain; its full sequence is WD repeat-containing protein 48 homolog (660 aa).

8 WD repeats span residues 23 to 78, 84 to 120, 123 to 162, 174 to 213, 216 to 255, 258 to 297, 300 to 341, and 362 to 401; these read MHRS…RDLH, HHTDWVNDIVLCCGVISASSDTTVKVWNAQKGFCMST, THRDYVRALAYARDVEMVASGGFDQLIYLWDIATLTKLTA, GNKDSIYSLATNPSGTVVISGSTEKVLRVFDPRACQKLMK, GHTDNVKAVVVNRDGTQCISASSDGTIKLWSIGQQCCISS, CHSESVWALQVDSNFSCVYSGGRDKRIFRTAINDFKTAQL, IEDA…ISVE, and PGAASIRQHVVLNDKRHIVTKDTDDNVAMWDVLKGRKVCD.

This sequence belongs to the WD repeat WDR48 family.

Regulator of deubiquitinating complexes. Activates deubiquitination by increasing the catalytic turnover without increasing the affinity of deubiquitinating enzymes for the substrate. This is WD repeat-containing protein 48 homolog from Brugia malayi (Filarial nematode worm).